A 206-amino-acid polypeptide reads, in one-letter code: Alpha-S1-casein (206 aa).

A signal peptide spans 1–15 (MKLLIFICLAAVALA). 8 positions are modified to phosphoserine: serine 33, serine 77, serine 78, serine 79, serine 80, serine 81, serine 82, and serine 89. A disordered region spans residues 67–106 (HGMEGHEQRGSSSSSSEEVVGNSAEQKHVQKEEDVPSQSY). Residues 91–100 (EQKHVQKEED) are compositionally biased toward basic and acidic residues.

This sequence belongs to the alpha-casein family. Mammary gland specific. Secreted in milk.

It localises to the secreted. Important role in the capacity of milk to transport calcium phosphate. This Sus scrofa (Pig) protein is Alpha-S1-casein (CSN1S1).